Here is a 297-residue protein sequence, read N- to C-terminus: tRNA dimethylallyltransferase (297 aa).

10 to 17 (GITASGKS) contacts ATP. Residue 12–17 (TASGKS) participates in substrate binding. Residues 36–39 (DSKQ) are interaction with substrate tRNA.

It belongs to the IPP transferase family. In terms of assembly, monomer. Requires Mg(2+) as cofactor.

The enzyme catalyses adenosine(37) in tRNA + dimethylallyl diphosphate = N(6)-dimethylallyladenosine(37) in tRNA + diphosphate. Its function is as follows. Catalyzes the transfer of a dimethylallyl group onto the adenine at position 37 in tRNAs that read codons beginning with uridine, leading to the formation of N6-(dimethylallyl)adenosine (i(6)A). The sequence is that of tRNA dimethylallyltransferase from Wolbachia sp. subsp. Brugia malayi (strain TRS).